A 463-amino-acid polypeptide reads, in one-letter code: MSHSSAPERATGAVITDWRPEDPAFWQQRGQRIASRNLWISVPCLLLAFCVWMLFSAVAVNLPKVGFNFTTDQLFMLTALPSVSGALLRVPYSFMVPIFGGRRWTAFSTGILIIPCVWLGFAVQDTSTPYSVFIIISLLCGFAGANFASSMANISFFFPKQKQGGALGLNGGLGNMGVSVMQLVAPLVVSLSIFAVFGSQGVKQPDGTELYLANASWIWVPFLAIFTIAAWFGMNDLATSKASIKEQLPVLKRGHLWIMSLLYLATFGSFIGFSAGFAMLSKTQFPDVQILQYAFFGPFIGALARSAGGALSDRLGGTRVTLVNFILMAIFSGLLFLTLPTDGQGGSFMAFFAVFLALFLTAGLGSGSTFQMISVIFRKLTMDRVKAEGGSDERAMREAATDTAAALGFISAIGAIGGFFIPKAFGSSLALTGSPVGAMKVFLIFYIACVVITWAVYGRHSKK.

The Cytoplasmic portion of the chain corresponds to 1–37 (MSHSSAPERATGAVITDWRPEDPAFWQQRGQRIASRN). A helical transmembrane segment spans residues 38 to 59 (LWISVPCLLLAFCVWMLFSAVA). At 60–73 (VNLPKVGFNFTTDQ) the chain is on the periplasmic side. The helical transmembrane segment at 74–95 (LFMLTALPSVSGALLRVPYSFM) threads the bilayer. Arg89 lines the nitrate pocket. Arg89 contributes to the nitrite binding site. Residues 96 to 102 (VPIFGGR) are Cytoplasmic-facing. The helical transmembrane segment at 103–122 (RWTAFSTGILIIPCVWLGFA) threads the bilayer. At 123–130 (VQDTSTPY) the chain is on the periplasmic side. A helical transmembrane segment spans residues 131-151 (SVFIIISLLCGFAGANFASSM). Over 152–166 (ANISFFFPKQKQGGA) the chain is Cytoplasmic. Residues 167-189 (LGLNGGLGNMGVSVMQLVAPLVV) form a helical membrane-spanning segment. Residue Asn175 coordinates nitrate. Topologically, residues 190 to 211 (SLSIFAVFGSQGVKQPDGTELY) are periplasmic. A helical membrane pass occupies residues 212 to 233 (LANASWIWVPFLAIFTIAAWFG). Over 234–253 (MNDLATSKASIKEQLPVLKR) the chain is Cytoplasmic. A helical membrane pass occupies residues 254-281 (GHLWIMSLLYLATFGSFIGFSAGFAMLS). Tyr263 serves as a coordination point for nitrate. A nitrite-binding site is contributed by Tyr263. Residues 282-289 (KTQFPDVQ) lie on the Periplasmic side of the membrane. A helical transmembrane segment spans residues 290-312 (ILQYAFFGPFIGALARSAGGALS). At 313-316 (DRLG) the chain is on the cytoplasmic side. A helical membrane pass occupies residues 317–338 (GTRVTLVNFILMAIFSGLLFLT). The Periplasmic segment spans residues 339-347 (LPTDGQGGS). Residues 348–373 (FMAFFAVFLALFLTAGLGSGSTFQMI) form a helical membrane-spanning segment. The Cytoplasmic portion of the chain corresponds to 374–405 (SVIFRKLTMDRVKAEGGSDERAMREAATDTAA). Residues 406 to 427 (ALGFISAIGAIGGFFIPKAFGS) traverse the membrane as a helical segment. Ser411 lines the nitrate pocket. At 428 to 435 (SLALTGSP) the chain is on the periplasmic side. The chain crosses the membrane as a helical span at residues 436–458 (VGAMKVFLIFYIACVVITWAVYG). The Cytoplasmic segment spans residues 459 to 463 (RHSKK).

The protein belongs to the major facilitator superfamily. Nitrate/nitrite porter (TC 2.A.1.8) family.

The protein resides in the cell inner membrane. The catalysed reaction is nitrate(in) + nitrite(out) = nitrate(out) + nitrite(in). Its function is as follows. Catalyzes nitrate uptake, nitrite uptake and nitrite export across the cytoplasmic membrane. Functions as a nitrate/nitrite exchanger, and protons are unlikely to be co-transported. This Escherichia coli (strain K12) protein is Nitrate/nitrite antiporter NarK.